Reading from the N-terminus, the 211-residue chain is Troponin I, cardiac muscle (211 aa).

A disordered region spans residues 1–23; sequence MADESGDAAGCPPPAPAPIRRQS. A2 is subject to N-acetylalanine. S5 is subject to Phosphoserine. Residues S23 and S24 each carry the phosphoserine; by PKA and PKD/PRKD1 modification. Position 27 is a phosphotyrosine (Y27). Phosphothreonine; by STK4/MST1 is present on T32. Residues 33–80 form an involved in binding TNC region; it reads EPHAKKKSKISASRKLQLKTLMLQIAKQELEREAEERRGEKGRALSTR. 2 positions are modified to phosphoserine; by PKC/PRKCE: S43 and S45. T52 is modified (phosphothreonine; by STK4/MST1). S78 bears the Phosphoserine mark. The residue at position 79 (T79) is a Phosphothreonine. Residues T130 and T144 each carry the phosphothreonine; by STK4/MST1 modification. Residues 130-150 form an involved in binding TNC and actin region; sequence TQKIFDLRGKFKRPTLRRVRI. At S151 the chain carries Phosphoserine; by PAK3. S167 carries the post-translational modification Phosphoserine. Phosphothreonine is present on T182. S200 is modified (phosphoserine).

The protein belongs to the troponin I family. In terms of assembly, binds to actin and tropomyosin. Interacts with TRIM63. Interacts with STK4/MST1. In terms of processing, phosphorylated at Ser-23 and Ser-24 by PRKD1; phosphorylation reduces myofilament calcium sensitivity. Phosphorylated preferentially at Thr-32. Phosphorylation by STK4/MST1 alters its binding affinity to TNNC1 (cardiac Tn-C) and TNNT2 (cardiac Tn-T). Phosphorylated at Ser-43 and Ser-45 by PRKCE; phosphorylation increases myocardium contractile dysfunction.

Its function is as follows. Troponin I is the inhibitory subunit of troponin, the thin filament regulatory complex which confers calcium-sensitivity to striated muscle actomyosin ATPase activity. The sequence is that of Troponin I, cardiac muscle (TNNI3) from Canis lupus familiaris (Dog).